Here is a 317-residue protein sequence, read N- to C-terminus: Ribosomal large subunit pseudouridine synthase D (317 aa).

Residues 15 to 89 (WRLDRALASL…IPLEIVFEDE (75 aa)) enclose the S4 RNA-binding domain. D141 is an active-site residue.

Belongs to the pseudouridine synthase RluA family.

It is found in the cytoplasm. The catalysed reaction is uridine(1911/1915/1917) in 23S rRNA = pseudouridine(1911/1915/1917) in 23S rRNA. Responsible for synthesis of pseudouridine from uracil at positions 1911, 1915 and 1917 in 23S ribosomal RNA. This Zymomonas mobilis subsp. mobilis (strain ATCC 31821 / ZM4 / CP4) protein is Ribosomal large subunit pseudouridine synthase D.